We begin with the raw amino-acid sequence, 273 residues long: Cell division protein FtsQ (273 aa).

Topologically, residues 1–10 (MWNDARTINL) are cytoplasmic. The chain crosses the membrane as a helical span at residues 11 to 31 (IANTLAVLAVAAMLLAGVAWV). The Periplasmic segment spans residues 32–273 (AQRPYFTLAA…HSKSKPAKKR (242 aa)). The POTRA domain occupies 37-110 (FTLAAIEIES…NTLRVRVEEQ (74 aa)).

This sequence belongs to the FtsQ/DivIB family. FtsQ subfamily. In terms of assembly, part of a complex composed of FtsB, FtsL and FtsQ.

Its subcellular location is the cell inner membrane. Its function is as follows. Essential cell division protein. May link together the upstream cell division proteins, which are predominantly cytoplasmic, with the downstream cell division proteins, which are predominantly periplasmic. May control correct divisome assembly. The chain is Cell division protein FtsQ from Bordetella pertussis (strain Tohama I / ATCC BAA-589 / NCTC 13251).